The primary structure comprises 332 residues: UDP-N-acetylenolpyruvoylglucosamine reductase (332 aa).

In terms of domain architecture, FAD-binding PCMH-type spans 15-184; sequence IDVSAACFLE…TYVSFRLSKR (170 aa). The active site involves R160. Catalysis depends on S232, which acts as the Proton donor. E328 is a catalytic residue.

Belongs to the MurB family. Requires FAD as cofactor.

It is found in the cytoplasm. It carries out the reaction UDP-N-acetyl-alpha-D-muramate + NADP(+) = UDP-N-acetyl-3-O-(1-carboxyvinyl)-alpha-D-glucosamine + NADPH + H(+). It participates in cell wall biogenesis; peptidoglycan biosynthesis. Functionally, cell wall formation. The polypeptide is UDP-N-acetylenolpyruvoylglucosamine reductase (Bacteroides fragilis (strain ATCC 25285 / DSM 2151 / CCUG 4856 / JCM 11019 / LMG 10263 / NCTC 9343 / Onslow / VPI 2553 / EN-2)).